Consider the following 201-residue polypeptide: Cerebellin-4 (201 aa).

Positions 1-27 (MGSGRRALSAVPAVLLVLTLPGLPVWA) are cleaved as a signal peptide. Residues asparagine 29 and asparagine 88 are each glycosylated (N-linked (GlcNAc...) asparagine). Positions 66 to 201 (AANSKVAFSA…TFSGFLVFPL (136 aa)) constitute a C1q domain.

In terms of assembly, homohexamer; disulfide-linked homotrimers. The trimers are assembled via the globular C1q domains. The trimers associate via N-terminal cysteine residues to form disulfide-linked hexamers. May form oligomers with CBLN1, CBLN2 and CBLN3 prior to secretion. Strongly interacts with DCC in a NTN1-displaceable fashion. Weakly binds to NRXN1 and NRXN2 long and short isoforms produced by alternative promoter usage. Interaction with NRXN3 short isoform is hardly detectable; no interaction at all with NRXN3 long isoform. Post-translationally, sialoglycoprotein.

The protein resides in the secreted. Its subcellular location is the synapse. Its function is as follows. Acts as a synaptic organizer in specific subsets of neurons in the brain. Essential for the formation and maintenance of inhibitory GABAergic synapses. Promotes the development of dendrite-targeting inhibitory GABAergic synapses made by somatostatin-positive interneurons. May contribute to the function of ventral medial habenula region of the brain implicated in the regulation of anxiety-related behaviors. May play a role in CBLN3 export from the endoplasmic reticulum and secretion. The sequence is that of Cerebellin-4 (CBLN4) from Homo sapiens (Human).